The primary structure comprises 318 residues: MAGLKRRASQVWPEEHGEQEHGLYSLHRMFDIVGTHLTHRDVRVLSFLFVDVIDDHERGLIRNGRDFLLALERQGRCDESNFRQVLQLLRIITRHDLLPYVTLKRRRAVCPDLVDKYLEETSIRYVTPRALSDPEPRPPQPSKTVPPHYPVVCCPTSGPQMCSKRPARGRATLGSQRKRRKSVTPDPKEKQTCDIRLRVRAEYCQHETALQGNVFSNKQDPLERQFERFNQANTILKSRDLGSIICDIKFSELTYLDAFWRDYINGSLLEALKGVFITDSLKQAVGHEAIKLLVNVDEEDYELGRQKLLRNLMLQALP.

In terms of domain architecture, DED spans 25-103 (SLHRMFDIVG…RHDLLPYVTL (79 aa)). 2 disordered regions span residues 128 to 147 (PRAL…TVPP) and 160 to 191 (QMCS…KEKQ).

As to quaternary structure, interacts with CASP8, CASP10, KRT8, KRT18, CASP3 and FADD. Homodimerizes and heterodimerizes with DEDD2. Exists predominantly in a mono- or diubiquitinated form. As to expression, widely expressed with highest levels in testis.

It is found in the cytoplasm. It localises to the nucleus. Its subcellular location is the nucleolus. Functionally, a scaffold protein that directs CASP3 to certain substrates and facilitates their ordered degradation during apoptosis. May also play a role in mediating CASP3 cleavage of KRT18. Regulates degradation of intermediate filaments during apoptosis. May play a role in the general transcription machinery in the nucleus and might be an important regulator of the activity of GTF3C3. Inhibits DNA transcription in vitro. The protein is Death effector domain-containing protein (DEDD) of Homo sapiens (Human).